A 178-amino-acid chain; its full sequence is Small ribosomal subunit protein uS4 (178 aa).

Residues 104 to 166 (RRLQTIVYRK…PNSPMASENH (63 aa)) form the S4 RNA-binding domain. Positions 158–178 (NSPMASENHPERTAAVSEENQ) are disordered.

It belongs to the universal ribosomal protein uS4 family. In terms of assembly, part of the 30S ribosomal subunit. Contacts protein S5. The interaction surface between S4 and S5 is involved in control of translational fidelity.

Functionally, one of the primary rRNA binding proteins, it binds directly to 16S rRNA where it nucleates assembly of the body of the 30S subunit. Its function is as follows. With S5 and S12 plays an important role in translational accuracy. This chain is Small ribosomal subunit protein uS4, found in Methanococcus maripaludis (strain C5 / ATCC BAA-1333).